The primary structure comprises 605 residues: Elongation factor 4 (605 aa).

Residues 9–191 form the tr-type G domain; that stretch reads DTIRNFCIIA…AIIKRVPAPV (183 aa). GTP is bound by residues 21-26 and 138-141; these read DHGKST and NKID.

This sequence belongs to the TRAFAC class translation factor GTPase superfamily. Classic translation factor GTPase family. LepA subfamily.

It localises to the cell inner membrane. It catalyses the reaction GTP + H2O = GDP + phosphate + H(+). In terms of biological role, required for accurate and efficient protein synthesis under certain stress conditions. May act as a fidelity factor of the translation reaction, by catalyzing a one-codon backward translocation of tRNAs on improperly translocated ribosomes. Back-translocation proceeds from a post-translocation (POST) complex to a pre-translocation (PRE) complex, thus giving elongation factor G a second chance to translocate the tRNAs correctly. Binds to ribosomes in a GTP-dependent manner. In Chlorobium phaeobacteroides (strain BS1), this protein is Elongation factor 4.